A 261-amino-acid polypeptide reads, in one-letter code: Calcium-binding protein 8 (261 aa).

The tract at residues 1 to 39 (MRLPEQPGEGKPENEKKGDGGALGGGEEPPRSQAPDFPT) is disordered. Topologically, residues 1–234 (MRLPEQPGEG…QNRQTCVRKS (234 aa)) are cytoplasmic. The span at 8 to 19 (GEGKPENEKKGD) shows a compositional bias: basic and acidic residues. EF-hand domains are found at residues 78 to 113 (EELD…LGYM) and 114 to 149 (PSEV…KLVS). Positions 91, 93, 95, 102, 127, 129, 131, 133, and 138 each coordinate Ca(2+). The helical; Anchor for type IV membrane protein transmembrane segment at 235 to 255 (LICAFAMAFIISVMLIAANQI) threads the bilayer. The Extracellular segment spans residues 256–261 (LRSGME).

As to quaternary structure, interacts with PI4KB. This binding competes with FREQ/NCS1 binding in a calcium-dependent manner. As to expression, brain specific.

The protein resides in the golgi apparatus. It localises to the trans-Golgi network membrane. Its subcellular location is the cytoplasm. It is found in the perinuclear region. The protein localises to the cell membrane. Its function is as follows. Negatively regulates Golgi-to-plasma membrane trafficking by interacting with PI4KB and inhibiting its activity. May play a role in the physiology of neurons and is potentially important in memory and learning. The protein is Calcium-binding protein 8 (CALN1) of Homo sapiens (Human).